A 271-amino-acid polypeptide reads, in one-letter code: Formamidopyrimidine-DNA glycosylase (271 aa).

Pro2 acts as the Schiff-base intermediate with DNA in catalysis. Glu3 serves as the catalytic Proton donor. Residue Lys58 is the Proton donor; for beta-elimination activity of the active site. His92, Arg111, and Arg152 together coordinate DNA. The FPG-type zinc-finger motif lies at 237-271 (FVYGRQQQPCKQCGSLLRQTTIRQRTTVWCGHCQG). The active-site Proton donor; for delta-elimination activity is the Arg261.

It belongs to the FPG family. As to quaternary structure, monomer. Zn(2+) is required as a cofactor.

It carries out the reaction Hydrolysis of DNA containing ring-opened 7-methylguanine residues, releasing 2,6-diamino-4-hydroxy-5-(N-methyl)formamidopyrimidine.. It catalyses the reaction 2'-deoxyribonucleotide-(2'-deoxyribose 5'-phosphate)-2'-deoxyribonucleotide-DNA = a 3'-end 2'-deoxyribonucleotide-(2,3-dehydro-2,3-deoxyribose 5'-phosphate)-DNA + a 5'-end 5'-phospho-2'-deoxyribonucleoside-DNA + H(+). In terms of biological role, involved in base excision repair of DNA damaged by oxidation or by mutagenic agents. Acts as a DNA glycosylase that recognizes and removes damaged bases. Has a preference for oxidized purines, such as 7,8-dihydro-8-oxoguanine (8-oxoG). Has AP (apurinic/apyrimidinic) lyase activity and introduces nicks in the DNA strand. Cleaves the DNA backbone by beta-delta elimination to generate a single-strand break at the site of the removed base with both 3'- and 5'-phosphates. The chain is Formamidopyrimidine-DNA glycosylase (mutM1) from Xylella fastidiosa (strain 9a5c).